A 434-amino-acid polypeptide reads, in one-letter code: MSLSGQLWKMVNSTSPNAAATVGNIAYCYVLPCICAIGIVGNITNLMVLASRRLRAVSYMYLRALAVADLLCMLFVLVFVSTEYLAKNGSSINQYKLYQIYQCHLMLTLINWALGAGVYVVVALSLERYISIVFPMHFRTWNSPQRATRAIVIAFLIPAIFYVPYAITRYKGKQRFDLLQNVTIYSMDDHPIYTTFYWQIYKWTREAILRFLPIIILTVLNIQIMIAFRKRQKMFQQLTNKRKEQGTQKDDTLMYMLGGTVLMSLVCNIPAAINLLLIDETLKKRLDYQIFRAVANILEITNHASQFYVFCACSTDYRTTFLQKFPCFKTDYANRDRLRSFVRRTQSVIQKQGSVEHTTNSKVWIMFKNKFQRDSLSHHSRKFSRHMPIEQDTVDIQLASGEQSTSGEMCEADTLIKYGGTAQLCNDENNTTFL.

Asn12 carries an N-linked (GlcNAc...) asparagine glycan. 2 helical membrane passes run 30-50 (VLPC…MVLA) and 65-85 (LAVA…TEYL). Residue Asn88 is glycosylated (N-linked (GlcNAc...) asparagine). A run of 2 helical transmembrane segments spans residues 105–125 (LMLT…VALS) and 147–167 (ATRA…PYAI). The N-linked (GlcNAc...) asparagine glycan is linked to Asn181. The next 2 helical transmembrane spans lie at 208-228 (ILRF…MIAF) and 258-278 (GGTV…LLLI). 2 N-linked (GlcNAc...) asparagine glycosylation sites follow: Asn429 and Asn430.

This sequence belongs to the G-protein coupled receptor 1 family.

The protein resides in the cell membrane. Its function is as follows. Not known. Putative receptor. This chain is Probable G-protein coupled receptor B0563.6, found in Caenorhabditis elegans.